The sequence spans 106 residues: Movement protein TGB2 (106 aa).

Over 1–9 (MPLTPPPDH) the chain is Cytoplasmic. Residues 10-30 (TKVLLVAAIGLSIVASILTYS) form a helical membrane-spanning segment. Topologically, residues 31-71 (RNTLPQVGDHSHLLPHGGVYKDGTKTIVYGGPRKLNSLEGG) are lumenal. The helical transmembrane segment at 72–92 (FNLPVQPWFLVILLSAAIFLL) threads the bilayer. Topologically, residues 93–106 (SCRSGHRRVCGQCH) are cytoplasmic.

This sequence belongs to the Tymovirales TGBp2 protein family.

It is found in the host endoplasmic reticulum membrane. Functionally, plays a role in viral cell-to-cell propagation, by facilitating genome transport to neighboring plant cells through plasmosdesmata,. The protein is Movement protein TGB2 of Chrysanthemum morifolium (Florist's daisy).